The sequence spans 282 residues: MSKPEEVVNHVPEDEGSDIEAGGLFEDPPDFYPPSPPPTTEHYTMKNGDDITLHLVGHSPLEAHTLWNGAVIISQYFEEHPEEVKDRTVLEIGAAAGLPSLVAAVLGAKKVVVTDFPDPDIVDVMWKNIRGCPMLAVDREEDRNIVADGYVWGGKEAPLLAHLGEQKEGEAGFDVLILADLLFRHSEHSKLVDTIQFTLKKKPGSKAFVVFTSYRPWLQHKDLAFFDLARERGFIVDKFLEVKTEKPLFENDPGDEEIRKTVTGWTVRWPTDDEKAAAKADA.

Over residues 1–13 (MSKPEEVVNHVPE) the composition is skewed to basic and acidic residues. The interval 1-32 (MSKPEEVVNHVPEDEGSDIEAGGLFEDPPDFY) is disordered. S-adenosyl-L-methionine contacts are provided by residues Trp67, 93–95 (GAA), Asp115, Trp152, and Ala179.

The protein belongs to the class I-like SAM-binding methyltransferase superfamily. EFM7 family.

It localises to the cytoplasm. S-adenosyl-L-methionine-dependent protein methyltransferase that trimethylates the N-terminal glycine 'Gly-2' of elongation factor 1-alpha, before also catalyzing the mono- and dimethylation of 'Lys-3'. The sequence is that of Protein N-terminal and lysine N-methyltransferase efm7 (nnt-1) from Neurospora crassa (strain ATCC 24698 / 74-OR23-1A / CBS 708.71 / DSM 1257 / FGSC 987).